Consider the following 417-residue polypeptide: Snake venom metalloproteinase acutolysin-C (417 aa).

The first 20 residues, 1 to 20 (MIQVLLVTICLAALPYQGSS), serve as a signal peptide directing secretion. Residues 21–189 (IMLESGKVND…KRPSRLNLTP (169 aa)) constitute a propeptide, activation peptide. Residues 197–392 (TSVNLQLIVD…KKPKCIHKKS (196 aa)) form the Peptidase M12B domain. Cystine bridges form between cysteine 308–cysteine 387, cysteine 349–cysteine 371, and cysteine 351–cysteine 354. Histidine 333 is a binding site for Zn(2+). Glutamate 334 is an active-site residue. Zn(2+)-binding residues include histidine 337 and histidine 343. The propeptide occupies 393–417 (LKTDTVSTSVSGNEPLDDNVDGFHA). Residues 398–417 (VSTSVSGNEPLDDNVDGFHA) form a disordered region. Acidic residues predominate over residues 407-417 (PLDDNVDGFHA).

The protein belongs to the venom metalloproteinase (M12B) family. P-I subfamily. Monomer. Requires Zn(2+) as cofactor. Expressed by the venom gland.

Its subcellular location is the secreted. This protein is an alkaline zinc metalloprotease from snake venom that possesses weak hemorrhagic activity. This is Snake venom metalloproteinase acutolysin-C from Deinagkistrodon acutus (Hundred-pace snake).